The chain runs to 1140 residues: TBC1 domain family member 8 (1140 aa).

2 consecutive GRAM domains span residues 145-212 (VKFE…ERTS) and 285-353 (EFFR…EKME). The region spanning 505–692 (GIPESLRGRL…NVVDCFFYDG (188 aa)) is the Rab-GAP TBC domain. A disordered region spans residues 1031–1070 (GQRGSSSGSCSQECGEELRASAPSPEDSVFADTGKTPQDS). A compositionally biased stretch (low complexity) spans 1032-1043 (QRGSSSGSCSQE).

Its function is as follows. May act as a GTPase-activating protein for Rab family protein(s). The polypeptide is TBC1 domain family member 8 (TBC1D8) (Homo sapiens (Human)).